Consider the following 258-residue polypeptide: Na(+)-translocating NADH-quinone reductase subunit C (258 aa).

The chain crosses the membrane as a helical span at residues 14 to 34 (LIVVLAVSLICSVIVAGAVVG). Serine 226 carries the FMN phosphoryl serine modification.

It belongs to the NqrC family. In terms of assembly, composed of six subunits; NqrA, NqrB, NqrC, NqrD, NqrE and NqrF. FMN is required as a cofactor.

Its subcellular location is the cell inner membrane. The enzyme catalyses a ubiquinone + n Na(+)(in) + NADH + H(+) = a ubiquinol + n Na(+)(out) + NAD(+). Functionally, NQR complex catalyzes the reduction of ubiquinone-1 to ubiquinol by two successive reactions, coupled with the transport of Na(+) ions from the cytoplasm to the periplasm. NqrA to NqrE are probably involved in the second step, the conversion of ubisemiquinone to ubiquinol. The sequence is that of Na(+)-translocating NADH-quinone reductase subunit C from Neisseria meningitidis serogroup B (strain ATCC BAA-335 / MC58).